Reading from the N-terminus, the 438-residue chain is Tol-Pal system protein TolB (438 aa).

The first 35 residues, 1–35, serve as a signal peptide directing secretion; it reads MITMKNILKLRATGLLLLLLLMISVLGNGIGQAMA.

The protein belongs to the TolB family. The Tol-Pal system is composed of five core proteins: the inner membrane proteins TolA, TolQ and TolR, the periplasmic protein TolB and the outer membrane protein Pal. They form a network linking the inner and outer membranes and the peptidoglycan layer.

The protein resides in the periplasm. Functionally, part of the Tol-Pal system, which plays a role in outer membrane invagination during cell division and is important for maintaining outer membrane integrity. This is Tol-Pal system protein TolB from Desulfotalea psychrophila (strain LSv54 / DSM 12343).